The following is a 235-amino-acid chain: Homeobox protein Nkx-2.8 (235 aa).

Positions 51–67 (SDESGLETSPADSSQLA) are enriched in polar residues. Residues 51–86 (SDESGLETSPADSSQLASLRRESPGSDPEKRRKRRV) form a disordered region. Basic and acidic residues predominate over residues 69–80 (LRRESPGSDPEK). Positions 81-140 (RRKRRVLFSKAQTLELERRFRQQRYLSAPEREQLARLLRLTPTQVKIWFQNHRYKLKRGR) form a DNA-binding region, homeobox.

The protein belongs to the NK-2 homeobox family. In terms of tissue distribution, prominent expression in ventral brain and neural tube structures.

The protein resides in the nucleus. Possible role in the specification of a distinct subset of neurons. This is Homeobox protein Nkx-2.8 (Nkx2-8) from Mus musculus (Mouse).